Here is a 362-residue protein sequence, read N- to C-terminus: Chorismate synthase (362 aa).

Arg-47 provides a ligand contact to NADP(+). FMN contacts are provided by residues 124–126 (RAS), Gly-286, 301–305 (KPTAT), and Arg-327.

The protein belongs to the chorismate synthase family. As to quaternary structure, homotetramer. It depends on FMNH2 as a cofactor.

It catalyses the reaction 5-O-(1-carboxyvinyl)-3-phosphoshikimate = chorismate + phosphate. It participates in metabolic intermediate biosynthesis; chorismate biosynthesis; chorismate from D-erythrose 4-phosphate and phosphoenolpyruvate: step 7/7. In terms of biological role, catalyzes the anti-1,4-elimination of the C-3 phosphate and the C-6 proR hydrogen from 5-enolpyruvylshikimate-3-phosphate (EPSP) to yield chorismate, which is the branch point compound that serves as the starting substrate for the three terminal pathways of aromatic amino acid biosynthesis. This reaction introduces a second double bond into the aromatic ring system. The chain is Chorismate synthase from Prochlorococcus marinus (strain SARG / CCMP1375 / SS120).